The following is a 211-amino-acid chain: uncharacterized protein (211 aa).

This is an uncharacterized protein from Treponema pallidum (strain Nichols).